Consider the following 432-residue polypeptide: MQKIAGVKGMNDLLPGDAPLWEHFDNAVRSMLRAYGYQQIRTPIVEQTQLFVRGIGEVTDIVEKEMYSFTDALNGEQLTMRPEGTAAAVRAVIEHNLLYDGPKRLWYTGPMFRHEKPQRGRYRQFHQVGVEALGFAGPDIDAEVILMCQRLWDDLGLVGLKLELNSLGQAEERAAHRADLIKYLEGFQDILDEDSKRRLYTNPLRVLDTKNPALQEMAAGAPKLIDYLGEESCAHFEGVQKLLKANNIPFTINPRLVRGLDYYNLTVFEWTTDKLGAQGTVAGGGRYDPLIEQIGGKPAPACGWAMGVERIIELLREENLAPEPQGSDVYIVHQGDEAQVQALVAAERLRDAGLDVILHASAEGRNGSFKSQFKRADASGAAYAVIIGDDEVASGVVQIKPLRGDPNADAQQTVPSDQLVDRLIDAMVANSD.

Belongs to the class-II aminoacyl-tRNA synthetase family. As to quaternary structure, homodimer.

It localises to the cytoplasm. It carries out the reaction tRNA(His) + L-histidine + ATP = L-histidyl-tRNA(His) + AMP + diphosphate + H(+). The sequence is that of Histidine--tRNA ligase from Ralstonia nicotianae (strain ATCC BAA-1114 / GMI1000) (Ralstonia solanacearum).